The following is a 426-amino-acid chain: UDP-N-acetylglucosamine 1-carboxyvinyltransferase (426 aa).

24-25 is a binding site for phosphoenolpyruvate; sequence KN. Arginine 95 serves as a coordination point for UDP-N-acetyl-alpha-D-glucosamine. The active-site Proton donor is cysteine 119. Residue cysteine 119 is modified to 2-(S-cysteinyl)pyruvic acid O-phosphothioketal. UDP-N-acetyl-alpha-D-glucosamine-binding positions include 124–128, aspartate 308, and valine 330; that span reads RPVDQ.

The protein belongs to the EPSP synthase family. MurA subfamily.

It is found in the cytoplasm. It catalyses the reaction phosphoenolpyruvate + UDP-N-acetyl-alpha-D-glucosamine = UDP-N-acetyl-3-O-(1-carboxyvinyl)-alpha-D-glucosamine + phosphate. It functions in the pathway cell wall biogenesis; peptidoglycan biosynthesis. In terms of biological role, cell wall formation. Adds enolpyruvyl to UDP-N-acetylglucosamine. The protein is UDP-N-acetylglucosamine 1-carboxyvinyltransferase of Deinococcus radiodurans (strain ATCC 13939 / DSM 20539 / JCM 16871 / CCUG 27074 / LMG 4051 / NBRC 15346 / NCIMB 9279 / VKM B-1422 / R1).